A 114-amino-acid chain; its full sequence is MHVDIYQIAASDTAIYPGAGDCDSIEGLSYVTMGLVGEAGEIANKVKKILRDKDGVITQENRDDLQAELGDVMWYVAQLANQLDVWLSTVTQRNLNKLQSRKDRGVIQGSGDNR.

The polypeptide is Gene 37 protein (37) (Mycobacterium (Mycobacteriophage L5)).